The sequence spans 354 residues: L-Lys-D/L-Arg epimerase (354 aa).

Substrate is bound by residues T135 and K160 to K162. The Mg(2+) site is built by D190, E215, and D240. Substrate contacts are provided by residues K265, D295, and D318–D320.

It belongs to the mandelate racemase/muconate lactonizing enzyme family. The cofactor is Mg(2+).

Its function is as follows. Catalyzes the epimerization of L-Lys-L-Arg to L-Lys-D-Arg (in vitro). Catalyzes the epimerization of positively charged dipeptides, with a preference for substrates with a basic amino acid in the second position. Has epimerase activity with L-Lys-L-Lys, L-Arg-L-Arg, L-Val-L-Arg, L-Val-L-Lys and L-Ala-L-Arg (in vitro). The polypeptide is L-Lys-D/L-Arg epimerase (Desulforapulum autotrophicum (strain ATCC 43914 / DSM 3382 / VKM B-1955 / HRM2) (Desulfobacterium autotrophicum)).